Here is a 590-residue protein sequence, read N- to C-terminus: Cytosolic Fe-S cluster assembly factor nar1 (590 aa).

Position 20 (cysteine 20) interacts with [4Fe-4S] cluster. Residues 25–50 (ESLPQKQSNENPYEVTTEDKVQPENP) are disordered. Cysteine 60, cysteine 63, cysteine 66, cysteine 204, and cysteine 259 together coordinate [4Fe-4S] cluster. The disordered stretch occupies residues 423-446 (PGAKVATGQTAGGRRQPISRNGAS). Residues cysteine 461 and cysteine 465 each coordinate [4Fe-4S] cluster.

The protein belongs to the NARF family.

Its function is as follows. Component of the cytosolic Fe/S protein assembly machinery. Required for maturation of extramitochondrial Fe/S proteins. May play a role in the transfer of pre-assembled Fe/S clusters to target apoproteins. This Emericella nidulans (strain FGSC A4 / ATCC 38163 / CBS 112.46 / NRRL 194 / M139) (Aspergillus nidulans) protein is Cytosolic Fe-S cluster assembly factor nar1 (nar1).